Reading from the N-terminus, the 264-residue chain is NAD kinase 1 (264 aa).

Asp-45 serves as the catalytic Proton acceptor. NAD(+)-binding positions include 45 to 46, 122 to 123, Arg-148, Asp-150, 161 to 166, and Ala-185; these read DG, NE, and TAYNKS.

This sequence belongs to the NAD kinase family. The cofactor is a divalent metal cation.

It is found in the cytoplasm. The enzyme catalyses NAD(+) + ATP = ADP + NADP(+) + H(+). Its function is as follows. Involved in the regulation of the intracellular balance of NAD and NADP, and is a key enzyme in the biosynthesis of NADP. Catalyzes specifically the phosphorylation on 2'-hydroxyl of the adenosine moiety of NAD to yield NADP. This chain is NAD kinase 1, found in Listeria innocua serovar 6a (strain ATCC BAA-680 / CLIP 11262).